Consider the following 185-residue polypeptide: Dual specificity protein phosphatase 3 (185 aa).

Residues Q28 to K179 enclose the Tyrosine-protein phosphatase domain. C124 (phosphocysteine intermediate) is an active-site residue.

It belongs to the protein-tyrosine phosphatase family. Non-receptor class dual specificity subfamily. Microtubule inner protein component of sperm flagellar doublet microtubules. Interacts with VRK3; this interaction activates DUSP3 phosphatase activity.

Its subcellular location is the nucleus. It is found in the cytoplasm. The protein localises to the cytoskeleton. It localises to the flagellum axoneme. It catalyses the reaction O-phospho-L-tyrosyl-[protein] + H2O = L-tyrosyl-[protein] + phosphate. It carries out the reaction O-phospho-L-seryl-[protein] + H2O = L-seryl-[protein] + phosphate. The catalysed reaction is O-phospho-L-threonyl-[protein] + H2O = L-threonyl-[protein] + phosphate. Functionally, shows activity both for tyrosine-protein phosphate and serine-protein phosphate, but displays a strong preference toward phosphotyrosines. Specifically dephosphorylates and inactivates ERK1 and ERK2. The polypeptide is Dual specificity protein phosphatase 3 (Dusp3) (Mus musculus (Mouse)).